A 522-amino-acid polypeptide reads, in one-letter code: DEAD-box ATP-dependent RNA helicase 1 (522 aa).

The Q motif motif lies at 30 to 59 (CALDTLPCLNPKLKKALENMGISSLFPVQV). The region spanning 66 to 297 (IGPGGFERDI…QLDLHHPLFM (232 aa)) is the Helicase ATP-binding domain. Residue 79 to 86 (SPTGSGKT) participates in ATP binding. The short motif at 207–210 (DETD) is the DEAD box element. The Helicase C-terminal domain maps to 325-475 (YLVALLKSWE…PIPPTSLDSI (151 aa)). Residues 490–522 (VESEAPKKGRQAFRHNSRTGNSQTKLNKPRSEA) form a disordered region. The span at 497–506 (KGRQAFRHNS) shows a compositional bias: basic residues.

This sequence belongs to the DEAD box helicase family. DDX51/DBP6 subfamily.

It catalyses the reaction ATP + H2O = ADP + phosphate + H(+). The sequence is that of DEAD-box ATP-dependent RNA helicase 1 (RH1) from Arabidopsis thaliana (Mouse-ear cress).